A 209-amino-acid polypeptide reads, in one-letter code: FMN-dependent NADH:quinone oxidoreductase 2 (209 aa).

17 to 19 provides a ligand contact to FMN; sequence SAS.

Belongs to the azoreductase type 1 family. In terms of assembly, homodimer. It depends on FMN as a cofactor.

The enzyme catalyses 2 a quinone + NADH + H(+) = 2 a 1,4-benzosemiquinone + NAD(+). It catalyses the reaction N,N-dimethyl-1,4-phenylenediamine + anthranilate + 2 NAD(+) = 2-(4-dimethylaminophenyl)diazenylbenzoate + 2 NADH + 2 H(+). In terms of biological role, quinone reductase that provides resistance to thiol-specific stress caused by electrophilic quinones. Also exhibits azoreductase activity. Catalyzes the reductive cleavage of the azo bond in aromatic azo compounds to the corresponding amines. The sequence is that of FMN-dependent NADH:quinone oxidoreductase 2 from Lactiplantibacillus plantarum (strain ATCC BAA-793 / NCIMB 8826 / WCFS1) (Lactobacillus plantarum).